The chain runs to 269 residues: tRNA pseudouridine synthase A (269 aa).

The active-site Nucleophile is Asp51. Position 109 (Tyr109) interacts with substrate.

This sequence belongs to the tRNA pseudouridine synthase TruA family. As to quaternary structure, homodimer.

It catalyses the reaction uridine(38/39/40) in tRNA = pseudouridine(38/39/40) in tRNA. Functionally, formation of pseudouridine at positions 38, 39 and 40 in the anticodon stem and loop of transfer RNAs. This chain is tRNA pseudouridine synthase A, found in Histophilus somni (strain 129Pt) (Haemophilus somnus).